Consider the following 211-residue polypeptide: Large ribosomal subunit protein uL3 (211 aa).

Glutamine 150 carries the N5-methylglutamine modification.

It belongs to the universal ribosomal protein uL3 family. As to quaternary structure, part of the 50S ribosomal subunit. Forms a cluster with proteins L14 and L19. In terms of processing, methylated by PrmB.

In terms of biological role, one of the primary rRNA binding proteins, it binds directly near the 3'-end of the 23S rRNA, where it nucleates assembly of the 50S subunit. The protein is Large ribosomal subunit protein uL3 of Pseudomonas fluorescens (strain Pf0-1).